A 344-amino-acid chain; its full sequence is tRNA N6-adenosine threonylcarbamoyltransferase (344 aa).

Positions 116 and 120 each coordinate Fe cation. Residues 138–142 (LVSGG), D171, G184, D188, and N277 each bind substrate. Residue D307 coordinates Fe cation.

The protein belongs to the KAE1 / TsaD family. Fe(2+) serves as cofactor.

Its subcellular location is the cytoplasm. The catalysed reaction is L-threonylcarbamoyladenylate + adenosine(37) in tRNA = N(6)-L-threonylcarbamoyladenosine(37) in tRNA + AMP + H(+). Its function is as follows. Required for the formation of a threonylcarbamoyl group on adenosine at position 37 (t(6)A37) in tRNAs that read codons beginning with adenine. Is involved in the transfer of the threonylcarbamoyl moiety of threonylcarbamoyl-AMP (TC-AMP) to the N6 group of A37, together with TsaE and TsaB. TsaD likely plays a direct catalytic role in this reaction. The protein is tRNA N6-adenosine threonylcarbamoyltransferase of Latilactobacillus sakei subsp. sakei (strain 23K) (Lactobacillus sakei subsp. sakei).